Consider the following 391-residue polypeptide: Elongation factor Tu (391 aa).

Residues 10–201 enclose the tr-type G domain; it reads KPHVNIGTIG…AVDDYIPTPA (192 aa). Residues 19-26 form a G1 region; that stretch reads GHVDHGKT. Position 19-26 (19-26) interacts with GTP; it reads GHVDHGKT. Mg(2+) is bound at residue Thr26. Positions 55-59 are G2; the sequence is GITIS. Positions 76-79 are G3; that stretch reads DCPG. Residues 76–80 and 131–134 each bind GTP; these read DCPGH and NKVD. The tract at residues 131 to 134 is G4; that stretch reads NKVD. The tract at residues 169-171 is G5; the sequence is SAL.

Belongs to the TRAFAC class translation factor GTPase superfamily. Classic translation factor GTPase family. EF-Tu/EF-1A subfamily. As to quaternary structure, monomer.

It is found in the cytoplasm. It catalyses the reaction GTP + H2O = GDP + phosphate + H(+). Its function is as follows. GTP hydrolase that promotes the GTP-dependent binding of aminoacyl-tRNA to the A-site of ribosomes during protein biosynthesis. The sequence is that of Elongation factor Tu from Dinoroseobacter shibae (strain DSM 16493 / NCIMB 14021 / DFL 12).